The primary structure comprises 178 residues: Protein-export protein SecB (178 aa).

A compositionally biased stretch (acidic residues) spans 1 to 13 (MADEGDVLTDLDM). The tract at residues 1–25 (MADEGDVLTDLDMDPAAGGNGADNR) is disordered.

Belongs to the SecB family. Homotetramer, a dimer of dimers. One homotetramer interacts with 1 SecA dimer.

Its subcellular location is the cytoplasm. Its function is as follows. One of the proteins required for the normal export of preproteins out of the cell cytoplasm. It is a molecular chaperone that binds to a subset of precursor proteins, maintaining them in a translocation-competent state. It also specifically binds to its receptor SecA. In Erythrobacter litoralis (strain HTCC2594), this protein is Protein-export protein SecB.